The following is a 727-amino-acid chain: NADH-ubiquinone oxidoreductase 75 kDa subunit, mitochondrial (727 aa).

The N-terminal 23 residues, 1-23 (MLRIPVRKALVGLSKSSKGCVRT), are a transit peptide targeting the mitochondrion. A 2Fe-2S ferredoxin-type domain is found at 30–108 (NLIEVFVDGQ…GWNILTNSEK (79 aa)). [2Fe-2S] cluster-binding residues include Cys64, Cys75, and Cys78. Lys84 carries the post-translational modification N6-acetyllysine. Position 92 (Cys92) interacts with [2Fe-2S] cluster. Residues 108-147 (KTKKAREGVMEFLLANHPLDCPICDQGGECDLQDQSMMFG) form the 4Fe-4S His(Cys)3-ligated-type domain. [4Fe-4S] cluster is bound by residues His124, Cys128, Cys131, Cys137, Cys176, Cys179, Cys182, and Cys226. The 4Fe-4S Mo/W bis-MGD-type domain maps to 245–301 (TRKTESIDVMDAVGSNIVVSTRTGEVMRILPRMHEDINEEWISDKTRFAYDGLKRQR). 2 positions are modified to N6-acetyllysine: Lys499 and Lys709.

Belongs to the complex I 75 kDa subunit family. In terms of assembly, core subunit of respiratory chain NADH dehydrogenase (Complex I) which is composed of 45 different subunits. This is the largest subunit of complex I and it is a component of the iron-sulfur (IP) fragment of the enzyme. Complex I associates with ubiquinol-cytochrome reductase complex (Complex III) to form supercomplexes. Interacts with MDM2 and AKAP1. It depends on [2Fe-2S] cluster as a cofactor. Requires [4Fe-4S] cluster as cofactor.

The protein resides in the mitochondrion inner membrane. It catalyses the reaction a ubiquinone + NADH + 5 H(+)(in) = a ubiquinol + NAD(+) + 4 H(+)(out). Core subunit of the mitochondrial membrane respiratory chain NADH dehydrogenase (Complex I) which catalyzes electron transfer from NADH through the respiratory chain, using ubiquinone as an electron acceptor. Essential for catalysing the entry and efficient transfer of electrons within complex I. Plays a key role in the assembly and stability of complex I and participates in the association of complex I with ubiquinol-cytochrome reductase complex (Complex III) to form supercomplexes. The polypeptide is NADH-ubiquinone oxidoreductase 75 kDa subunit, mitochondrial (NDUFS1) (Bos taurus (Bovine)).